The sequence spans 242 residues: MSTDKKFIYRRILLKISGEVLQGVNKFGIDINSLKRIAKEIEFIVKIGVQVGLVIGSGNLFRGAKLSKLGLNRVASDHIGILSTVINSLAMRDTINSISSIKTCLMSAIPLNGICEIYNYEKAMNLLSNHVVVIFSAGTGNPFFTTDSAACLRGIETESDIILKGTKVDGVYSKDPNKDSHAFLYRRLTYKDVLKKELKIMDLAAFTLARDYHMPIRVFNIHTPGSLYRIIMGDDEGTLITR.

ATP-binding positions include 15 to 18 (KISG), Gly-58, and Arg-62. Residues Asp-77 and 139-146 (TGNPFFTT) contribute to the UMP site. The ATP site is built by Thr-166, Tyr-172, and Asp-175.

Belongs to the UMP kinase family. In terms of assembly, homohexamer.

It localises to the cytoplasm. It carries out the reaction UMP + ATP = UDP + ADP. It functions in the pathway pyrimidine metabolism; CTP biosynthesis via de novo pathway; UDP from UMP (UMPK route): step 1/1. Its activity is regulated as follows. Inhibited by UTP. Its function is as follows. Catalyzes the reversible phosphorylation of UMP to UDP. The sequence is that of Uridylate kinase from Buchnera aphidicola subsp. Acyrthosiphon pisum (strain APS) (Acyrthosiphon pisum symbiotic bacterium).